We begin with the raw amino-acid sequence, 707 residues long: DNA ligase (707 aa).

NAD(+)-binding positions include 48–52 (DAEYD), 97–98 (SI), and E134. Catalysis depends on K136, which acts as the N6-AMP-lysine intermediate. Residues R157, E193, K320, and K344 each coordinate NAD(+). Zn(2+) is bound by residues C438, C441, C456, and C462. The 87-residue stretch at 621-707 (VAPKPLSGKT…DSPPDERIPA (87 aa)) folds into the BRCT domain.

It belongs to the NAD-dependent DNA ligase family. LigA subfamily. Mg(2+) serves as cofactor. Mn(2+) is required as a cofactor.

The enzyme catalyses NAD(+) + (deoxyribonucleotide)n-3'-hydroxyl + 5'-phospho-(deoxyribonucleotide)m = (deoxyribonucleotide)n+m + AMP + beta-nicotinamide D-nucleotide.. In terms of biological role, DNA ligase that catalyzes the formation of phosphodiester linkages between 5'-phosphoryl and 3'-hydroxyl groups in double-stranded DNA using NAD as a coenzyme and as the energy source for the reaction. It is essential for DNA replication and repair of damaged DNA. The chain is DNA ligase from Polaromonas naphthalenivorans (strain CJ2).